The following is a 238-amino-acid chain: Ribonuclease PH (238 aa).

Phosphate contacts are provided by residues R86 and 124–126; that span reads GTR.

Belongs to the RNase PH family. As to quaternary structure, homohexameric ring arranged as a trimer of dimers.

It catalyses the reaction tRNA(n+1) + phosphate = tRNA(n) + a ribonucleoside 5'-diphosphate. In terms of biological role, phosphorolytic 3'-5' exoribonuclease that plays an important role in tRNA 3'-end maturation. Removes nucleotide residues following the 3'-CCA terminus of tRNAs; can also add nucleotides to the ends of RNA molecules by using nucleoside diphosphates as substrates, but this may not be physiologically important. Probably plays a role in initiation of 16S rRNA degradation (leading to ribosome degradation) during starvation. The protein is Ribonuclease PH of Psychrobacter arcticus (strain DSM 17307 / VKM B-2377 / 273-4).